Consider the following 395-residue polypeptide: Putative gustatory receptor 58a (395 aa).

Residues 1-32 (MLLKFMYIYGIGCGLMPAPLKKGQFLLGYKQR) are Cytoplasmic-facing. A helical transmembrane segment spans residues 33 to 53 (WYLIYTACLHGGLLTVLPFTF). Over 54 to 72 (PHYMYDDSYMSSNPVLKWT) the chain is Extracellular. A helical transmembrane segment spans residues 73 to 93 (FNLTNITRIMAMFSGVLLMWF). The Cytoplasmic segment spans residues 94–131 (RRKRILNLGENLILHCLKCKTLDNRSKKYSKLRKRVRN). Residues 132-152 (VLFQMLLVANLSILLGALILF) form a helical membrane-spanning segment. At 153 to 169 (RIHSVQRISKTAMIVAH) the chain is on the extracellular side. Residues 170 to 190 (ITQFIYVVFMMTGICVILLVL) form a helical membrane-spanning segment. At 191 to 250 (HWQSERLQIALKDLCSFLNHEERNSLTLSENKANRSLGKLAKLFKLFAENQRLVREVFRT) the chain is on the cytoplasmic side. The helical transmembrane segment at 251-271 (FDLPIALLLLKMFVTNVNLVY) threads the bilayer. Residues 272–288 (HGVQFGNDTIETSSYTR) are Extracellular-facing. A glycan (N-linked (GlcNAc...) asparagine) is linked at asparagine 278. A helical membrane pass occupies residues 289–309 (IVGQWVVISHYWSAVLLMNVV). Topologically, residues 310–366 (DDVTRRSDLKMGDLLREFSHLELVKRDFHLQLELFSDHLRCHPSTYKVCGLFIFNKQ) are cytoplasmic. The helical transmembrane segment at 367-387 (TSLAYFFYVLVQVLVLVQFDL) threads the bilayer. At 388-395 (KNKVEKRN) the chain is on the extracellular side.

Belongs to the insect chemoreceptor superfamily. Gustatory receptor (GR) family. Gr22e subfamily. As to expression, expressed in the adult labellar chemosensory neurons.

The protein resides in the cell membrane. In terms of biological role, probable gustatory receptor which mediates acceptance or avoidance behavior, depending on its substrates. The protein is Putative gustatory receptor 58a (Gr58a) of Drosophila melanogaster (Fruit fly).